The chain runs to 442 residues: Transcription factor AP-2-epsilon (442 aa).

The PPxY motif motif lies at 54-59 (YFPPPY). Ser246 bears the Phosphoserine; by PKA mark. The interval 287 to 417 (RRKAANVTLL…YLLESLKGLD (131 aa)) is H-S-H (helix-span-helix), dimerization.

Belongs to the AP-2 family. In terms of assembly, binds DNA as a dimer. Can form homodimers or heterodimers with other AP-2 family members. Expressed in skin, primary keratinocytes, immortalized keratinocytes, and HeLa cell line.

It localises to the nucleus. In terms of biological role, sequence-specific DNA-binding protein that interacts with inducible viral and cellular enhancer elements to regulate transcription of selected genes. AP-2 factors bind to the consensus sequence 5'-GCCNNNGGC-3' and activate genes involved in a large spectrum of important biological functions including proper eye, face, body wall, limb and neural tube development. They also suppress a number of genes including MCAM/MUC18, C/EBP alpha and MYC. AP-2-epsilon may play a role in the development of the CNS and in cartilage differentiation. The chain is Transcription factor AP-2-epsilon from Homo sapiens (Human).